We begin with the raw amino-acid sequence, 488 residues long: Homoserine O-acetyltransferase (488 aa).

The AB hydrolase-1 domain occupies 47 to 355 (NAILVCHALT…SYGHDAFLLE (309 aa)). Serine 153 functions as the Nucleophile in the catalytic mechanism. Arginine 222 lines the substrate pocket. Active-site residues include aspartate 316 and histidine 349. Position 350 (aspartate 350) interacts with substrate. CBS domains are found at residues 376 to 433 (MTEK…CSKL) and 437 to 488 (MTRD…RLIG).

This sequence belongs to the AB hydrolase superfamily. MetX family. As to quaternary structure, homodimer.

The protein resides in the cytoplasm. It carries out the reaction L-homoserine + acetyl-CoA = O-acetyl-L-homoserine + CoA. Its pathway is amino-acid biosynthesis; L-methionine biosynthesis via de novo pathway; O-acetyl-L-homoserine from L-homoserine: step 1/1. Transfers an acetyl group from acetyl-CoA to L-homoserine, forming acetyl-L-homoserine. This is Homoserine O-acetyltransferase from Methanococcoides burtonii (strain DSM 6242 / NBRC 107633 / OCM 468 / ACE-M).